The primary structure comprises 1088 residues: Protocadherin-19 (1088 aa).

Residues 1 to 24 form the signal peptide; sequence MHSKDMDFVQMFVCFLLCWTGVDA. Residues 25–678 are Extracellular-facing; it reads VFNLKYTVEE…QEQIGPVNLS (654 aa). 6 Cadherin domains span residues 31 to 130, 131 to 239, 240 to 347, 351 to 454, 455 to 563, and 569 to 676; these read TVEE…APRF, PTNH…NPVF, DEPV…APEI, SENS…PPYF, TKPH…TPVM, and VNGT…GPVN. Residues glutamate 34 and glutamate 35 each coordinate Ca(2+). Asparagine 44 carries N-linked (GlcNAc...) asparagine glycosylation. Ca(2+)-binding residues include aspartate 89 and aspartate 91. Cysteine 94 and cysteine 100 are oxidised to a cystine. The Ca(2+) site is built by aspartate 122, valine 123, asparagine 124, aspartate 125, asparagine 126, glutamate 141, aspartate 156, aspartate 158, asparagine 162, glutamate 200, aspartate 213, aspartate 231, serine 232, asparagine 233, aspartate 234, asparagine 235, and glutamate 250. Asparagine 262 carries N-linked (GlcNAc...) asparagine glycosylation. The Ca(2+) site is built by aspartate 265, aspartate 267, and asparagine 271. A glycan (N-linked (GlcNAc...) asparagine) is linked at asparagine 284. The Ca(2+) site is built by aspartate 306, glutamate 308, aspartate 339, isoleucine 340, asparagine 341, aspartate 342, asparagine 343, glutamate 361, and aspartate 376. N-linked (GlcNAc...) asparagine glycosylation occurs at asparagine 377. Ca(2+)-binding residues include aspartate 378, asparagine 382, aspartate 413, and glutamate 415. Asparagine 421 carries N-linked (GlcNAc...) asparagine glycosylation. Aspartate 428, aspartate 446, glutamate 447, asparagine 448, aspartate 449, asparagine 450, glutamate 465, aspartate 480, aspartate 482, asparagine 486, asparagine 522, glutamate 524, and aspartate 537 together coordinate Ca(2+). The N-linked (GlcNAc...) asparagine glycan is linked to asparagine 486. A glycan (N-linked (GlcNAc...) asparagine) is linked at asparagine 546. Residues aspartate 555, valine 556, asparagine 557, aspartate 558, and asparagine 559 each contribute to the Ca(2+) site. N-linked (GlcNAc...) asparagine glycosylation occurs at asparagine 570. Aspartate 594, aspartate 596, asparagine 600, and aspartate 646 together coordinate Ca(2+). N-linked (GlcNAc...) asparagine glycosylation is present at asparagine 676. The helical transmembrane segment at 679–699 threads the bilayer; it reads LIFIIALGSIAVILFVTMIFV. Over 700 to 1088 the chain is Cytoplasmic; the sequence is AVKCKRDNKE…GSKRLKDIVL (389 aa). 4 disordered regions span residues 792–813, 851–875, 970–1032, and 1067–1088; these read NSRN…GPQQ, DMEG…HDVQ, TFGK…ASST, and TLLQ…DIVL. Residues 859 to 875 show a composition bias toward basic and acidic residues; that stretch reads DSGHEESDQTDSEHDVQ. A compositionally biased stretch (basic and acidic residues) spans 1071-1088; sequence DGRDKESPGSKRLKDIVL.

In terms of assembly, homodimer; antiparallel. Interacts with cadherin cdh2; the interaction confers robust cell adhesion activity on pcdh19. In terms of tissue distribution, in the embryo, strongly expressed in the developing nervous system. At 12 hours post fertilization (hpf), shows a segmental expression pattern in the anterior third of the neural keel with strong expression in the presumptive forebrain, cerebellum/rhombomere 1 and rhombomere 4. By 24 hpf, expressed widely in the brain and spinal cord with higher expression levels in the ventral telencephalon, dorsal and central thalamus, optic tectum, central tegmentum, cerebellum and dorsolateral regions of the hindbrain. As development proceeds, expression becomes restricted to the dorsal and/or lateral regions of the central nervous system. Not detected in the spinal cord of two- and three-day old embryos. Expressed in the eye primordium, developing retina, lens and otic vesicle. Expressed in the larval optic tectum at 4 days post-fertilization where it localizes in discrete columns of neurons. Expressed throughout the adult brain with strong expression in the ventromedial telencephalon, periventricular regions of the thalamus and anterior hypothalamus, stratum periventriculare of the optic tectum, dorsal tegmental nucleus, granular regions of the cerebellar body and valvula, and superficial layers of the facial and vagal lobes.

The protein resides in the cell membrane. Functionally, calcium-dependent cell-adhesion protein. Essential for the early stages of neurulation in the anterior neural plate. Shows little cell adhesion activity on its own but exhibits robust homophilic cell adhesion when in a complex with cadherin cdh2 and appears to mediate the adhesion while cdh2 acts as a cell adhesion cofactor in the complex. Functions with cdh2 to coordinate cell adhesion and cell movements during neurulation. Contributes to neural progenitor cell patterning with cdh2 by promoting homophilic cell interactions. Regulates the columnar organization of neurons in the optic tectum. The protein is Protocadherin-19 of Danio rerio (Zebrafish).